The sequence spans 159 residues: SsrA-binding protein (159 aa).

The protein belongs to the SmpB family.

It is found in the cytoplasm. Functionally, required for rescue of stalled ribosomes mediated by trans-translation. Binds to transfer-messenger RNA (tmRNA), required for stable association of tmRNA with ribosomes. tmRNA and SmpB together mimic tRNA shape, replacing the anticodon stem-loop with SmpB. tmRNA is encoded by the ssrA gene; the 2 termini fold to resemble tRNA(Ala) and it encodes a 'tag peptide', a short internal open reading frame. During trans-translation Ala-aminoacylated tmRNA acts like a tRNA, entering the A-site of stalled ribosomes, displacing the stalled mRNA. The ribosome then switches to translate the ORF on the tmRNA; the nascent peptide is terminated with the 'tag peptide' encoded by the tmRNA and targeted for degradation. The ribosome is freed to recommence translation, which seems to be the essential function of trans-translation. This chain is SsrA-binding protein, found in Saccharophagus degradans (strain 2-40 / ATCC 43961 / DSM 17024).